We begin with the raw amino-acid sequence, 273 residues long: MTIVATATRPQRAEGRGHLAAKLLDGRTRIRELYQEGAAKIRLPNTFDASMEAVIINTAGGLTGGDRMDWSVVAGAGTKIDVTTQACEKIYKASAGVAEVTTRIEAGAGARVDWLPQETILFDRAALFRRLDVDLDESAEFLAVEAVLLGRKAMGETVDTGLFRDRWRIRRSGRLIHAEELRFSEGVAALSARQAVLGGQVAFATLLYAGPLAEAYLGRVRSLLEGAMGGASAWGDKLVVRLAAADGFTLRKILIPVISVLRNGAPVPKVWNL.

It belongs to the UreD family. In terms of assembly, ureD, UreF and UreG form a complex that acts as a GTP-hydrolysis-dependent molecular chaperone, activating the urease apoprotein by helping to assemble the nickel containing metallocenter of UreC. The UreE protein probably delivers the nickel.

The protein resides in the cytoplasm. Required for maturation of urease via the functional incorporation of the urease nickel metallocenter. The protein is Urease accessory protein UreD of Rhizobium etli (strain ATCC 51251 / DSM 11541 / JCM 21823 / NBRC 15573 / CFN 42).